Reading from the N-terminus, the 702-residue chain is Ribosomal RNA large subunit methyltransferase K/L (702 aa).

The THUMP domain maps to L43–L154.

The protein belongs to the methyltransferase superfamily. RlmKL family.

The protein localises to the cytoplasm. It carries out the reaction guanosine(2445) in 23S rRNA + S-adenosyl-L-methionine = N(2)-methylguanosine(2445) in 23S rRNA + S-adenosyl-L-homocysteine + H(+). It catalyses the reaction guanosine(2069) in 23S rRNA + S-adenosyl-L-methionine = N(2)-methylguanosine(2069) in 23S rRNA + S-adenosyl-L-homocysteine + H(+). Its function is as follows. Specifically methylates the guanine in position 2445 (m2G2445) and the guanine in position 2069 (m7G2069) of 23S rRNA. This Escherichia coli (strain SMS-3-5 / SECEC) protein is Ribosomal RNA large subunit methyltransferase K/L.